The sequence spans 204 residues: Protein Mis18-alpha (204 aa).

Phosphoserine is present on residues Ser-13, Ser-16, and Ser-17. The 99-residue stretch at 51–149 (PLVFLCARCR…SVEAVESYTL (99 aa)) folds into the Mis18 domain. Positions 56, 59, 112, and 115 each coordinate Zn(2+). Lys-133 is covalently cross-linked (Glycyl lysine isopeptide (Lys-Gly) (interchain with G-Cter in SUMO2)). At Ser-204 the chain carries Phosphoserine.

Belongs to the mis18 family. In terms of assembly, homodimer, and heterodimer with OIP5/MIS18B. Identified in a complex containing MIS18A, OIP5/MIS18B, MIS18BP1, RBBP7 and RBBP4.

It localises to the nucleus. The protein localises to the chromosome. The protein resides in the centromere. Its function is as follows. Required for recruitment of CENPA to centromeres and normal chromosome segregation during mitosis. The sequence is that of Protein Mis18-alpha (Mis18a) from Mus musculus (Mouse).